A 95-amino-acid polypeptide reads, in one-letter code: Phosphoribosyl-ATP pyrophosphatase (95 aa).

It belongs to the PRA-PH family.

It is found in the cytoplasm. It carries out the reaction 1-(5-phospho-beta-D-ribosyl)-ATP + H2O = 1-(5-phospho-beta-D-ribosyl)-5'-AMP + diphosphate + H(+). It functions in the pathway amino-acid biosynthesis; L-histidine biosynthesis; L-histidine from 5-phospho-alpha-D-ribose 1-diphosphate: step 2/9. The protein is Phosphoribosyl-ATP pyrophosphatase of Halobacterium salinarum (strain ATCC 29341 / DSM 671 / R1).